The following is a 170-amino-acid chain: Large ribosomal subunit protein uL10 (170 aa).

Belongs to the universal ribosomal protein uL10 family. In terms of assembly, part of the ribosomal stalk of the 50S ribosomal subunit. The N-terminus interacts with L11 and the large rRNA to form the base of the stalk. The C-terminus forms an elongated spine to which L12 dimers bind in a sequential fashion forming a multimeric L10(L12)X complex.

Its function is as follows. Forms part of the ribosomal stalk, playing a central role in the interaction of the ribosome with GTP-bound translation factors. This Chlamydia abortus (strain DSM 27085 / S26/3) (Chlamydophila abortus) protein is Large ribosomal subunit protein uL10.